The chain runs to 270 residues: Interleukin-1 beta (270 aa).

Residues 1–118 constitute a propeptide that is removed on maturation; that stretch reads MARVPEPTSE…KCDDNAFVHD (118 aa).

This sequence belongs to the IL-1 family. In terms of assembly, monomer. In its precursor form, weakly interacts with full-length MEFV; the mature cytokine does not interact at all. Interacts with integrins ITGAV:ITGBV and ITGA5:ITGB1; integrin-binding is required for IL1B signaling. Interacts with cargo receptor TMED10; the interaction is direct and is required for the secretion of IL1B mature form. Interacts with HSP90AB1; the interaction facilitates cargo translocation into the ERGIC. Interacts with HSP90B1; the interaction facilitates cargo translocation into the ERGIC.

It is found in the cytoplasm. The protein localises to the cytosol. It localises to the secreted. Its subcellular location is the lysosome. The protein resides in the extracellular exosome. In terms of biological role, potent pro-inflammatory cytokine. Initially discovered as the major endogenous pyrogen, induces prostaglandin synthesis, neutrophil influx and activation, T-cell activation and cytokine production, B-cell activation and antibody production, and fibroblast proliferation and collagen production. Promotes Th17 differentiation of T-cells. Synergizes with IL12/interleukin-12 to induce IFNG synthesis from T-helper 1 (Th1) cells. Plays a role in angiogenesis by inducing VEGF production synergistically with TNF and IL6. Involved in transduction of inflammation downstream of pyroptosis: its mature form is specifically released in the extracellular milieu by passing through the gasdermin-D (GSDMD) pore. This chain is Interleukin-1 beta (IL1B), found in Mustela putorius furo (European domestic ferret).